The chain runs to 276 residues: Phosphonoacetaldehyde hydrolase (276 aa).

Asp-19 (nucleophile) is an active-site residue. Mg(2+) is bound by residues Asp-19 and Ala-21. The active-site Schiff-base intermediate with substrate is Lys-60. Position 193 (Asp-193) interacts with Mg(2+).

This sequence belongs to the HAD-like hydrolase superfamily. PhnX family. In terms of assembly, homodimer. Requires Mg(2+) as cofactor.

It carries out the reaction phosphonoacetaldehyde + H2O = acetaldehyde + phosphate + H(+). Involved in phosphonate degradation. In Bordetella bronchiseptica (strain ATCC BAA-588 / NCTC 13252 / RB50) (Alcaligenes bronchisepticus), this protein is Phosphonoacetaldehyde hydrolase.